The primary structure comprises 92 residues: Small ribosomal subunit protein uS19c (92 aa).

It belongs to the universal ribosomal protein uS19 family.

Its subcellular location is the plastid. It is found in the chloroplast. In terms of biological role, protein S19 forms a complex with S13 that binds strongly to the 16S ribosomal RNA. This is Small ribosomal subunit protein uS19c from Cicer arietinum (Chickpea).